The chain runs to 178 residues: Sec-independent protein translocase protein TatB (178 aa).

Residues 1-21 (MFDIGWSELVVIAVVALIAIG) traverse the membrane as a helical segment. A compositionally biased stretch (polar residues) spans 77–86 (TSGNLMTKLT). Residues 77-178 (TSGNLMTKLT…HEAVKDAKAS (102 aa)) form a disordered region. Over residues 93–102 (PKLEDLDKPA) the composition is skewed to basic and acidic residues. The span at 155–165 (HATPEPAPATH) shows a compositional bias: low complexity. The segment covering 166–178 (ETPHEAVKDAKAS) has biased composition (basic and acidic residues).

This sequence belongs to the TatB family. As to quaternary structure, the Tat system comprises two distinct complexes: a TatABC complex, containing multiple copies of TatA, TatB and TatC subunits, and a separate TatA complex, containing only TatA subunits. Substrates initially bind to the TatABC complex, which probably triggers association of the separate TatA complex to form the active translocon.

It localises to the cell inner membrane. Part of the twin-arginine translocation (Tat) system that transports large folded proteins containing a characteristic twin-arginine motif in their signal peptide across membranes. Together with TatC, TatB is part of a receptor directly interacting with Tat signal peptides. TatB may form an oligomeric binding site that transiently accommodates folded Tat precursor proteins before their translocation. The protein is Sec-independent protein translocase protein TatB of Nitrobacter hamburgensis (strain DSM 10229 / NCIMB 13809 / X14).